Here is a 131-residue protein sequence, read N- to C-terminus: MNIFRLLLATLLVSLCFLTAYSHLAEEKPKDDRSLRSNSSVNLLDFPSVSIVALNKKSKKISRKEAEKKRSSKKKASMKNVARPRPPPPNPCVATRNSCKSPAPACCDPCASCQCRFFRSACTCRVLSPSC.

The N-terminal stretch at 1–20 (MNIFRLLLATLLVSLCFLTA) is a signal peptide. N-linked (GlcNAc...) asparagine glycosylation occurs at asparagine 38. The disordered stretch occupies residues 57 to 104 (KSKKISRKEAEKKRSSKKKASMKNVARPRPPPPNPCVATRNSCKSPAP). 5 cysteine pairs are disulfide-bonded: cysteine 92–cysteine 107, cysteine 99–cysteine 113, cysteine 106–cysteine 124, cysteine 110–cysteine 131, and cysteine 115–cysteine 122. Residues 92–131 (CVATRNSCKSPAPACCDPCASCQCRFFRSACTCRVLSPSC) enclose the Agouti domain.

It is found in the secreted. Functionally, involved in the regulation of melanogenesis. The binding of ASP to MC1R precludes alpha-MSH initiated signaling and thus blocks production of cAMP, leading to a down-regulation of eumelanogenesis (brown/black pigment) and thus increasing synthesis of pheomelanin (yellow/red pigment). In Vulpes vulpes (Red fox), this protein is Agouti-signaling protein (ASIP).